Reading from the N-terminus, the 321-residue chain is MAKYTRGTVTAFSPFDARADAEALRKAMKGMGTDEETILKILTSRNNAQRQEIASAFKTLFGRDLVDDLKSELTGKFETLMVSLMRPARIFDAHALKHAIKGAGTNEKVLTEILASRTPAEVQNIKQVYMQEYEANLEDKITGETSGHFQRLLVVLLQANRDPDGRVDEALVEKDAQVLFRAGELKWGTDEETFITILGTRSVSHLRRVFDKYMTISGFQIEETIDRETSGDLEKLLLAVVKCIRSVPAYFAETLYYSMKGAGTDDDTLIRVMVSRSEIDLLDIRHEFRKNFAKSLYQMIQKDTSGDYRKALLLLCGGDDE.

Annexin repeat units lie at residues 15–86, 87–158, 170–242, and 246–317; these read FDAR…SLMR, PARI…VLLQ, ALVE…AVVK, and SVPA…LLCG.

This sequence belongs to the annexin family.

Its function is as follows. Collagen-binding protein. In Gallus gallus (Chicken), this protein is Annexin A5 (ANXA5).